Consider the following 180-residue polypeptide: Nucleoside triphosphate/diphosphate phosphatase (180 aa).

Arg26 (proton donor) is an active-site residue. Mg(2+) is bound by residues Asn90, Asp106, Asp108, Asp110, Asp123, and Glu126.

This sequence belongs to the Ntdp family. Requires Mg(2+) as cofactor.

The catalysed reaction is a ribonucleoside 5'-triphosphate + H2O = a ribonucleoside 5'-diphosphate + phosphate + H(+). The enzyme catalyses a ribonucleoside 5'-diphosphate + H2O = a ribonucleoside 5'-phosphate + phosphate + H(+). Its function is as follows. Has nucleoside phosphatase activity towards nucleoside triphosphates and nucleoside diphosphates. The protein is Nucleoside triphosphate/diphosphate phosphatase of Staphylococcus epidermidis (strain ATCC 35984 / DSM 28319 / BCRC 17069 / CCUG 31568 / BM 3577 / RP62A).